The sequence spans 88 residues: uncharacterized protein (88 aa).

The tract at residues 1-54 (AVDAYDDDDNLKNEEGDYYNESDDGYSGDEEEEEKQEEDEQDDDDLQFDDGVPE) is disordered. Over residues 16-53 (GDYYNESDDGYSGDEEEEEKQEEDEQDDDDLQFDDGVP) the composition is skewed to acidic residues.

As to expression, predominantly in developing fruit.

This is an uncharacterized protein from Fragaria ananassa (Strawberry).